The primary structure comprises 581 residues: ATP-dependent lipid A-core flippase (581 aa).

Transmembrane regions (helical) follow at residues 15–35 (LWPI…ALII), 62–82 (ISIW…SSGF), 152–172 (IIGL…VLII), 252–272 (IIIQ…SSLP), and 274–294 (IIDE…IALM). In terms of domain architecture, ABC transmembrane type-1 spans 27–309 (IISIVALIIN…LTNVNANFQK (283 aa)). An ABC transporter domain is found at 341–577 (IKFKNITFTY…KGVYAQIYRL (237 aa)). Position 375 to 382 (375 to 382 (GSSGAGKS)) interacts with ATP.

It belongs to the ABC transporter superfamily. Lipid exporter (TC 3.A.1.106) family. In terms of assembly, homodimer.

The protein resides in the cell membrane. The enzyme catalyses ATP + H2O + lipid A-core oligosaccharideSide 1 = ADP + phosphate + lipid A-core oligosaccharideSide 2.. In terms of biological role, involved in lipopolysaccharide (LPS) biosynthesis. Translocates lipid A-core from the inner to the outer leaflet of the inner membrane. Transmembrane domains (TMD) form a pore in the inner membrane and the ATP-binding domain (NBD) is responsible for energy generation. This chain is ATP-dependent lipid A-core flippase, found in Wigglesworthia glossinidia brevipalpis.